Reading from the N-terminus, the 644-residue chain is Coiled-coil domain-containing protein 22 homolog (644 aa).

The interval Asp316–Gln341 is disordered. Coiled coils occupy residues Lys333–Val383, Asp409–Asp486, and Gly592–Ser644.

The protein belongs to the CCDC22 family.

This chain is Coiled-coil domain-containing protein 22 homolog, found in Nematostella vectensis (Starlet sea anemone).